Here is a 529-residue protein sequence, read N- to C-terminus: MSESLLQTVVAYVELVLHHFMALSWTQQLSIVIVAPFIYSLVWQTLYSFRKDRVPLVPFMVPWVGSALAYGRAPYEFFGKCQQKYGDVFAFMLLGRVMTVYLGTKGHEFILNAKLAEVSAEEAYTKLTTPVFGEGVVYDCPNHRLMEQKKFCKNALSTEAFRRYVPMVMDEVRKYLRTSKHFMMNERSSGVVNVMETQPEMTIFTASRSLLGAEMHSMLDADFAYLYADLDKGFTPLNFVFRDLPLDNYRRRDNAQRTISSTYMKVIERRRKNNDVQDRDLIDALMTSAQYKDGVKMTDQQIANLLIGVLMGGQHTSAATSAWVLLHLAERPDIQEELYEEQMRVLDGGAKELTYELLQEMPLLNQVIKETLRMHHPLHSLFRKVTRDMPVPNTSYVIPKDHYVLASPGFCHLSEEYFPNAKEFNPHRWDNDAASSVSTGEKVDYGFGAISKGVSSPYLPFGGGRHRCIGEGFAYMQLGTIFSVVVRSMKWHFPADMKGVPNPDFTSMVTLPSEPCRIAWERRVPDQII.

Cysteine 468 contacts heme.

Belongs to the cytochrome P450 family. Requires heme as cofactor.

It localises to the membrane. The catalysed reaction is a 14alpha-methyl steroid + 3 reduced [NADPH--hemoprotein reductase] + 3 O2 = a Delta(14) steroid + formate + 3 oxidized [NADPH--hemoprotein reductase] + 4 H2O + 4 H(+). It carries out the reaction a 14alpha-methyl steroid + reduced [NADPH--hemoprotein reductase] + O2 = a 14alpha-hydroxymethyl steroid + oxidized [NADPH--hemoprotein reductase] + H2O + H(+). The enzyme catalyses a 14alpha-hydroxymethyl steroid + reduced [NADPH--hemoprotein reductase] + O2 = a 14alpha-formyl steroid + oxidized [NADPH--hemoprotein reductase] + 2 H2O + H(+). It catalyses the reaction a 14alpha-formyl steroid + reduced [NADPH--hemoprotein reductase] + O2 = a Delta(14) steroid + formate + oxidized [NADPH--hemoprotein reductase] + H2O + 2 H(+). The catalysed reaction is lanosterol + 3 reduced [NADPH--hemoprotein reductase] + 3 O2 = 4,4-dimethyl-5alpha-cholesta-8,14,24-trien-3beta-ol + formate + 3 oxidized [NADPH--hemoprotein reductase] + 4 H2O + 4 H(+). It carries out the reaction lanosterol + reduced [NADPH--hemoprotein reductase] + O2 = 32-hydroxylanosterol + oxidized [NADPH--hemoprotein reductase] + H2O + H(+). The enzyme catalyses 32-hydroxylanosterol + reduced [NADPH--hemoprotein reductase] + O2 = 32-oxolanosterol + oxidized [NADPH--hemoprotein reductase] + 2 H2O + H(+). It catalyses the reaction 32-oxolanosterol + reduced [NADPH--hemoprotein reductase] + O2 = 4,4-dimethyl-5alpha-cholesta-8,14,24-trien-3beta-ol + formate + oxidized [NADPH--hemoprotein reductase] + H2O + 2 H(+). The catalysed reaction is eburicol + 3 reduced [NADPH--hemoprotein reductase] + 3 O2 = 14-demethyleburicol + formate + 3 oxidized [NADPH--hemoprotein reductase] + 4 H2O + 4 H(+). It carries out the reaction eburicol + reduced [NADPH--hemoprotein reductase] + O2 = 32-hydroxyeburicol + oxidized [NADPH--hemoprotein reductase] + H2O + H(+). The enzyme catalyses 32-hydroxyeburicol + reduced [NADPH--hemoprotein reductase] + O2 = 32-oxoeburicol + oxidized [NADPH--hemoprotein reductase] + 2 H2O + H(+). It catalyses the reaction 32-oxoeburicol + reduced [NADPH--hemoprotein reductase] + O2 = 14-demethyleburicol + formate + oxidized [NADPH--hemoprotein reductase] + H2O + 2 H(+). It functions in the pathway steroid biosynthesis; zymosterol biosynthesis; zymosterol from lanosterol: step 1/6. Sterol 14alpha-demethylase that plays a critical role in the third module of ergosterol biosynthesis pathway, being ergosterol the major sterol component in fungal membranes that participates in a variety of functions. The third module or late pathway involves the ergosterol synthesis itself through consecutive reactions that mainly occur in the endoplasmic reticulum (ER) membrane. In filamentous fungi, during the initial step of this module, lanosterol (lanosta-8,24-dien-3beta-ol) can be metabolized to eburicol. Sterol 14alpha-demethylase catalyzes the three-step oxidative removal of the 14alpha-methyl group (C-32) of both these sterols in the form of formate, and converts eburicol and lanosterol to 14-demethyleburicol (4,4,24-trimethylergosta-8,14,24(28)-trienol) and 4,4-dimethyl-5alpha-cholesta-8,14,24-trien-3beta-ol, respectively, which are further metabolized by other enzymes in the pathway to ergosterol. Can also use substrates not intrinsic to fungi, such as 24,25-dihydrolanosterol (DHL), producing 4,4-dimethyl-8,14-cholestadien-3-beta-ol, but at lower rates than the endogenous substrates. In Eremothecium gossypii (strain ATCC 10895 / CBS 109.51 / FGSC 9923 / NRRL Y-1056) (Yeast), this protein is Lanosterol 14-alpha demethylase (ERG11).